The primary structure comprises 842 residues: Leucine--tRNA ligase (842 aa).

The 'HIGH' region signature appears at 44–55 (PYPSANGLHVGH). The 'KMSKS' region signature appears at 619–623 (KMSKS). Lys622 lines the ATP pocket.

Belongs to the class-I aminoacyl-tRNA synthetase family.

The protein localises to the cytoplasm. It catalyses the reaction tRNA(Leu) + L-leucine + ATP = L-leucyl-tRNA(Leu) + AMP + diphosphate. The sequence is that of Leucine--tRNA ligase from Borrelia hermsii (strain HS1 / DAH).